Consider the following 308-residue polypeptide: uncharacterized protein (308 aa).

Positions Leu6–Pro234 constitute an ABC transporter domain. Gly38–Thr45 contributes to the ATP binding site.

This sequence belongs to the ABC transporter superfamily.

This is an uncharacterized protein from Bacillus subtilis (strain 168).